Here is a 216-residue protein sequence, read N- to C-terminus: GTP:AMP phosphotransferase, mitochondrial (216 aa).

Glycine 15–threonine 20 lines the GTP pocket. Positions serine 35 to valine 64 are NMPbind. Residues threonine 36, arginine 41, lysine 62 to valine 64, glycine 89 to arginine 92, and glutamine 96 each bind AMP. Residues asparagine 125–aspartate 162 are LID. Residues arginine 126 and valine 135–tyrosine 136 contribute to the GTP site. AMP is bound by residues arginine 159 and arginine 170. Threonine 199 contributes to the GTP binding site.

Belongs to the adenylate kinase family. AK3 subfamily. As to quaternary structure, monomer. As to expression, ubiquitously expressed with highest levels expressed in the abdomen, suggesting a function in muscle tissues.

It is found in the mitochondrion matrix. It catalyses the reaction a ribonucleoside 5'-triphosphate + AMP = a ribonucleoside 5'-diphosphate + ADP. In terms of biological role, involved in maintaining the homeostasis of cellular nucleotides by catalyzing the interconversion of nucleoside phosphates. Has GTP:AMP phosphotransferase and ITP:AMP phosphotransferase activities. The chain is GTP:AMP phosphotransferase, mitochondrial from Drosophila melanogaster (Fruit fly).